Reading from the N-terminus, the 423-residue chain is AUGMIN subunit 4 (423 aa).

Residues 267-287 adopt a coiled-coil conformation; sequence IEEIERDEAALREDLYSADRK.

The protein belongs to the HAUS4 family. In terms of assembly, part of the augmin complex composed of 8 subunits. The complex acts on microtubules and interacts with gamma-tubulin in spindles and the phragmoplast.

It localises to the cytoplasm. The protein resides in the cytoskeleton. It is found in the spindle. Its subcellular location is the phragmoplast. Functionally, involved in microtubules reorganization during spindle and phragmoplast development. The protein is AUGMIN subunit 4 (AUG4) of Arabidopsis thaliana (Mouse-ear cress).